Consider the following 282-residue polypeptide: MAGKHGRNGFEDDDVNPFAGGSVPPANNSRLPPLSHEPADFYNVDIPLDSSKDLKKKEKELQAMEAELNKRERELKRKEEAAAQAGIVIEDKNWPPFFPLIHHNISNEIPIHLQRMQYLAFSSFLGLAACLFWNIIATTTAWVKGEGVIIWLLAIIYFISGVPGAYVLWYRPLYNAMRTESALKFGWFFLFYLIHIIFCVWAAVAPPFPFKGKSLAGILPAIDVIGRSAIVGIFYFVGFGLFCLESLLSIGVIQQVYMYFRGSGKAAEMKREAARGALSSAF.

The segment at 1 to 36 (MAGKHGRNGFEDDDVNPFAGGSVPPANNSRLPPLSH) is disordered. Residues 1–117 (MAGKHGRNGF…EIPIHLQRMQ (117 aa)) lie on the Cytoplasmic side of the membrane. Residues 48 to 92 (LDSSKDLKKKEKELQAMEAELNKRERELKRKEEAAAQAGIVIEDK) are a coiled coil. The next 4 membrane-spanning stretches (helical) occupy residues 118 to 138 (YLAFSSFLGLAACLFWNIIAT), 148 to 168 (VIIWLLAIIYFISGVPGAYVL), 185 to 205 (FGWFFLFYLIHIIFCVWAAVA), and 230 to 250 (IVGIFYFVGFGLFCLESLLSI). At 251-282 (GVIQQVYMYFRGSGKAAEMKREAARGALSSAF) the chain is on the cytoplasmic side.

This sequence belongs to the SCAMP family.

Its subcellular location is the cell membrane. The protein localises to the cytoplasmic vesicle. The protein resides in the secretory vesicle membrane. In terms of biological role, probably involved in membrane trafficking. This is Secretory carrier-associated membrane protein 3 (SCAMP3) from Oryza sativa subsp. japonica (Rice).